Here is a 214-residue protein sequence, read N- to C-terminus: Adenylate kinase (214 aa).

10–15 (GAGKGT) contacts ATP. An NMP region spans residues 30 to 59 (STGDMFREAVASKSELGKKVEEILKRGDLV). Residues threonine 31, arginine 36, 57–59 (DLV), 85–88 (GFPR), and glutamine 92 contribute to the AMP site. Residues 126–163 (NRRICSNCGKIYNLITLPPKVDGKCDVCGGTLYQREDD) are LID. An ATP-binding site is contributed by arginine 127. The Zn(2+) site is built by cysteine 130 and cysteine 133. Residue 136–137 (IY) participates in ATP binding. Residues cysteine 150 and cysteine 153 each coordinate Zn(2+). AMP is bound by residues arginine 160 and arginine 171. Residue leucine 199 participates in ATP binding.

It belongs to the adenylate kinase family. In terms of assembly, monomer.

Its subcellular location is the cytoplasm. It catalyses the reaction AMP + ATP = 2 ADP. Its pathway is purine metabolism; AMP biosynthesis via salvage pathway; AMP from ADP: step 1/1. Functionally, catalyzes the reversible transfer of the terminal phosphate group between ATP and AMP. Plays an important role in cellular energy homeostasis and in adenine nucleotide metabolism. This Thermosipho africanus (strain TCF52B) protein is Adenylate kinase.